The following is an 89-amino-acid chain: Small ribosomal subunit protein uS17 (89 aa).

This sequence belongs to the universal ribosomal protein uS17 family. As to quaternary structure, part of the 30S ribosomal subunit.

One of the primary rRNA binding proteins, it binds specifically to the 5'-end of 16S ribosomal RNA. The chain is Small ribosomal subunit protein uS17 from Xanthomonas axonopodis pv. citri (strain 306).